The following is a 441-amino-acid chain: ATP-dependent RNA helicase RhlB (441 aa).

Positions 9–37 (QKFADFSLNKEIKTALNESGFEFCTPIQA) match the Q motif motif. In terms of domain architecture, Helicase ATP-binding spans 40-219 (LPILLQKKDI…YDHMNEPEKV (180 aa)). 53 to 60 (AQTGTGKT) contacts ATP. The DEAD box signature appears at 165 to 168 (DEAD). A Helicase C-terminal domain is found at 243–390 (KMRLLLSLIE…VTNYDSEGLL (148 aa)). Positions 401 to 441 (RKHNNRPQQGRNNSGRPQGRNGNRAGGRNGPRRHDQVRRHS) are disordered.

Belongs to the DEAD box helicase family. RhlB subfamily. As to quaternary structure, component of the RNA degradosome, which is a multiprotein complex involved in RNA processing and mRNA degradation.

It localises to the cytoplasm. The catalysed reaction is ATP + H2O = ADP + phosphate + H(+). In terms of biological role, DEAD-box RNA helicase involved in RNA degradation. Has RNA-dependent ATPase activity and unwinds double-stranded RNA. This is ATP-dependent RNA helicase RhlB from Shewanella woodyi (strain ATCC 51908 / MS32).